The chain runs to 290 residues: UPF0761 membrane protein YihY (290 aa).

Helical transmembrane passes span 44 to 64 (LLSLVPLIAVVFALFAAFPMF), 104 to 124 (VGACGLIVTALLLMYAIDSAL), 140 to 160 (FAVYWMILTLGPLLAGASLAI), 183 to 203 (VLPLLLSWISFWLLYSIVPTT), 210 to 230 (AIVGAFVAALLFEAGKKGFAL), and 244 to 264 (VLAVIPILFVWVYWTWCIVLL).

This sequence belongs to the UPF0761 family.

The protein resides in the cell inner membrane. This chain is UPF0761 membrane protein YihY, found in Salmonella arizonae (strain ATCC BAA-731 / CDC346-86 / RSK2980).